We begin with the raw amino-acid sequence, 229 residues long: Ribonuclease 3 (229 aa).

Positions 8 to 130 (LTELEKIVGY…IIGAIYLDSD (123 aa)) constitute an RNase III domain. Mg(2+) is bound at residue Glu-43. Asp-47 is an active-site residue. Asp-116 and Glu-119 together coordinate Mg(2+). Glu-119 is a catalytic residue. The DRBM domain maps to 157-227 (DPKTRLQELL…ATAALEHLQE (71 aa)). The disordered stretch occupies residues 201–229 (SPFKGTGTSRRKAEQAAATAALEHLQESA).

Belongs to the ribonuclease III family. Homodimer. The cofactor is Mg(2+).

The protein localises to the cytoplasm. The catalysed reaction is Endonucleolytic cleavage to 5'-phosphomonoester.. Its function is as follows. Digests double-stranded RNA. Involved in the processing of primary rRNA transcript to yield the immediate precursors to the large and small rRNAs (23S and 16S). Processes some mRNAs, and tRNAs when they are encoded in the rRNA operon. Processes pre-crRNA and tracrRNA of type II CRISPR loci if present in the organism. In Idiomarina loihiensis (strain ATCC BAA-735 / DSM 15497 / L2-TR), this protein is Ribonuclease 3.